We begin with the raw amino-acid sequence, 255 residues long: Propionicin-F (255 aa).

2 propeptides span residues 1–101 (MNTK…RVSC) and 145–255 (GTPT…DETV).

The protein resides in the secreted. Bacteriocin with specific antibacterial activity against strains of P.freudenreichii. No antibacterial activity was detected against P.acidipropionici, P.jensenii and P.thoenii. This Propionibacterium freudenreichii subsp. freudenreichii protein is Propionicin-F.